Reading from the N-terminus, the 320-residue chain is Annexin A5 (320 aa).

Alanine 2 is modified (N-acetylalanine). Annexin repeat units follow at residues 15–86, 87–158, 170–242, and 246–317; these read FDER…ALMK, PSRL…VLLQ, AQVE…AVVK, and SIPA…LLCG. Lysine 29 participates in a covalent cross-link: Glycyl lysine isopeptide (Lys-Gly) (interchain with G-Cter in SUMO1); alternate. Residue lysine 29 forms a Glycyl lysine isopeptide (Lys-Gly) (interchain with G-Cter in SUMO2); alternate linkage. Serine 37 is modified (phosphoserine). 5 positions are modified to N6-acetyllysine: lysine 70, lysine 76, lysine 79, lysine 97, and lysine 101. At lysine 290 the chain carries N6-succinyllysine. The short motif at 314 to 319 is the [IL]-x-C-x-x-[DE] motif element; it reads LLCGED.

This sequence belongs to the annexin family. Monomer. Binds ATRX and EIF5B. Interacts with hepatitis B virus (HBV). S-nitrosylation is induced by interferon-gamma and oxidatively-modified low-densitity lipoprotein (LDL(ox)) possibly implicating the iNOS-S100A8/9 transnitrosylase complex.

Its function is as follows. This protein is an anticoagulant protein that acts as an indirect inhibitor of the thromboplastin-specific complex, which is involved in the blood coagulation cascade. In Homo sapiens (Human), this protein is Annexin A5 (ANXA5).